Reading from the N-terminus, the 230-residue chain is TorCAD operon transcriptional regulatory protein TorR (230 aa).

The 114-residue stretch at 4-117 (HIVIVEDEPV…ELVVRVKNLL (114 aa)) folds into the Response regulatory domain. At aspartate 53 the chain carries 4-aspartylphosphate. Positions 132 to 227 (DNCYRFAGYC…QHGEGYFLAA (96 aa)) form a DNA-binding region, ompR/PhoB-type.

In terms of processing, phosphorylated and dephosphorylated by TorS.

It localises to the cytoplasm. Functionally, member of the two-component regulatory system TorS/TorR involved in the anaerobic utilization of trimethylamine-N-oxide (TMAO). Phosphorylated TorR activates the transcription of the torCAD operon by binding to four decameric boxes located in the torCAD promoter. Box1, 2 and 4 contain the DNA sequence 5'-CTGTTCATAT-3' and box3 contains the DNA sequence 5'-CCGTTCATCC-3'. Phosphorylated as well as unphosphorylated TorR negatively regulates its own expression by binding to box1 and 2. This chain is TorCAD operon transcriptional regulatory protein TorR (torR), found in Escherichia coli O157:H7.